A 450-amino-acid polypeptide reads, in one-letter code: Bifunctional protein GlmU (450 aa).

The interval 1-229 is pyrophosphorylase; it reads MRRHAIILAA…VEEIMGVNDR (229 aa). UDP-N-acetyl-alpha-D-glucosamine-binding positions include 8-11, K22, Q72, and 77-78; these read LAAG and GT. D102 contributes to the Mg(2+) binding site. UDP-N-acetyl-alpha-D-glucosamine contacts are provided by G139, E154, and N227. Residue N227 coordinates Mg(2+). The tract at residues 230 to 250 is linker; that stretch reads VMLSQAENAMQRRTNHYHMLN. Residues 251–450 are N-acetyltransferase; sequence GVTIIDPDST…RQTTKEGYRK (200 aa). UDP-N-acetyl-alpha-D-glucosamine-binding residues include R332 and K350. The active-site Proton acceptor is the H362. Positions 365 and 376 each coordinate UDP-N-acetyl-alpha-D-glucosamine. Acetyl-CoA is bound by residues 385–386, A422, and R439; that span reads NY.

The protein in the N-terminal section; belongs to the N-acetylglucosamine-1-phosphate uridyltransferase family. In the C-terminal section; belongs to the transferase hexapeptide repeat family. As to quaternary structure, homotrimer. Mg(2+) serves as cofactor.

The protein resides in the cytoplasm. It catalyses the reaction alpha-D-glucosamine 1-phosphate + acetyl-CoA = N-acetyl-alpha-D-glucosamine 1-phosphate + CoA + H(+). The catalysed reaction is N-acetyl-alpha-D-glucosamine 1-phosphate + UTP + H(+) = UDP-N-acetyl-alpha-D-glucosamine + diphosphate. It functions in the pathway nucleotide-sugar biosynthesis; UDP-N-acetyl-alpha-D-glucosamine biosynthesis; N-acetyl-alpha-D-glucosamine 1-phosphate from alpha-D-glucosamine 6-phosphate (route II): step 2/2. The protein operates within nucleotide-sugar biosynthesis; UDP-N-acetyl-alpha-D-glucosamine biosynthesis; UDP-N-acetyl-alpha-D-glucosamine from N-acetyl-alpha-D-glucosamine 1-phosphate: step 1/1. It participates in bacterial outer membrane biogenesis; LPS lipid A biosynthesis. Functionally, catalyzes the last two sequential reactions in the de novo biosynthetic pathway for UDP-N-acetylglucosamine (UDP-GlcNAc). The C-terminal domain catalyzes the transfer of acetyl group from acetyl coenzyme A to glucosamine-1-phosphate (GlcN-1-P) to produce N-acetylglucosamine-1-phosphate (GlcNAc-1-P), which is converted into UDP-GlcNAc by the transfer of uridine 5-monophosphate (from uridine 5-triphosphate), a reaction catalyzed by the N-terminal domain. This Staphylococcus aureus (strain MRSA252) protein is Bifunctional protein GlmU.